The chain runs to 220 residues: Probable nicotinate-nucleotide adenylyltransferase (220 aa).

The protein belongs to the NadD family.

It carries out the reaction nicotinate beta-D-ribonucleotide + ATP + H(+) = deamido-NAD(+) + diphosphate. Its pathway is cofactor biosynthesis; NAD(+) biosynthesis; deamido-NAD(+) from nicotinate D-ribonucleotide: step 1/1. Its function is as follows. Catalyzes the reversible adenylation of nicotinate mononucleotide (NaMN) to nicotinic acid adenine dinucleotide (NaAD). This Laribacter hongkongensis (strain HLHK9) protein is Probable nicotinate-nucleotide adenylyltransferase.